A 916-amino-acid polypeptide reads, in one-letter code: uncharacterized protein (916 aa).

This is an uncharacterized protein from Micromonas pusilla reovirus (isolate Netherlands/2005) (MpRV).